A 233-amino-acid chain; its full sequence is UPF0758 protein RoseRS_0767 (233 aa).

Positions Leu107–Gly229 constitute an MPN domain. Zn(2+)-binding residues include His178, His180, and Asp191. The JAMM motif motif lies at His178 to Asp191.

The protein belongs to the UPF0758 family.

This is UPF0758 protein RoseRS_0767 from Roseiflexus sp. (strain RS-1).